A 227-amino-acid chain; its full sequence is Cytochrome c oxidase subunit 2 (227 aa).

Residues 1–26 lie on the Mitochondrial intermembrane side of the membrane; it reads MATWSNLSIQDGASPLMEQLSFFHDD. The helical transmembrane segment at 27–48 threads the bilayer; it reads HTMVVLLITVIVGYALSYMLFN. Topologically, residues 49 to 62 are mitochondrial matrix; sequence AYTNRNMLHGHLIE. Residues 63-82 form a helical membrane-spanning segment; it reads TIWTALPAITLIFIALPSLR. Over 83-227 the chain is Mitochondrial intermembrane; that stretch reads LLYLLDDSVD…LFIKWLSKMI (145 aa). The Cu cation site is built by H161, C196, E198, C200, H204, and M207. A Mg(2+)-binding site is contributed by E198.

The protein belongs to the cytochrome c oxidase subunit 2 family. In terms of assembly, component of the cytochrome c oxidase (complex IV, CIV), a multisubunit enzyme composed of a catalytic core of 3 subunits and several supernumerary subunits. The complex exists as a monomer or a dimer and forms supercomplexes (SCs) in the inner mitochondrial membrane with ubiquinol-cytochrome c oxidoreductase (cytochrome b-c1 complex, complex III, CIII). The cofactor is Cu cation.

The protein resides in the mitochondrion inner membrane. The enzyme catalyses 4 Fe(II)-[cytochrome c] + O2 + 8 H(+)(in) = 4 Fe(III)-[cytochrome c] + 2 H2O + 4 H(+)(out). In terms of biological role, component of the cytochrome c oxidase, the last enzyme in the mitochondrial electron transport chain which drives oxidative phosphorylation. The respiratory chain contains 3 multisubunit complexes succinate dehydrogenase (complex II, CII), ubiquinol-cytochrome c oxidoreductase (cytochrome b-c1 complex, complex III, CIII) and cytochrome c oxidase (complex IV, CIV), that cooperate to transfer electrons derived from NADH and succinate to molecular oxygen, creating an electrochemical gradient over the inner membrane that drives transmembrane transport and the ATP synthase. Cytochrome c oxidase is the component of the respiratory chain that catalyzes the reduction of oxygen to water. Electrons originating from reduced cytochrome c in the intermembrane space (IMS) are transferred via the dinuclear copper A center (CU(A)) of subunit 2 and heme A of subunit 1 to the active site in subunit 1, a binuclear center (BNC) formed by heme A3 and copper B (CU(B)). The BNC reduces molecular oxygen to 2 water molecules using 4 electrons from cytochrome c in the IMS and 4 protons from the mitochondrial matrix. The chain is Cytochrome c oxidase subunit 2 (COII) from Schistocerca gregaria (Desert locust).